We begin with the raw amino-acid sequence, 210 residues long: Protein GET1 (210 aa).

At 1-4 the chain is on the lumenal side; the sequence is MPSL. The helical transmembrane segment at 5 to 24 threads the bilayer; it reads LIIVLIIHVVTYLINTIGAN. Over 25-110 the chain is Cytoplasmic; sequence TIDSLLWLLY…SFDLAVKSVR (86 aa). A coiled-coil region spans residues 39-95; that stretch reads NQTSQTADEQRRLKREVMQLKREMNATSSQDEFAKWAKLRRRHDKTMEEYEAKNKAL. The helical transmembrane segment at 111–131 threads the bilayer; it reads FFSTTGLKLFLQFWFSKTPIF. Residues 132 to 155 are Lumenal-facing; that stretch reads ELPRGWIPWQVEWVLSFPRAPLGT. The chain crosses the membrane as a helical span at residues 156–172; the sequence is VSIQIWGGVCATVVSLA. Residues 173 to 210 lie on the Cytoplasmic side of the membrane; sequence GDAIGVVNVYLTSKAPKQKEPATSGENSARPMAIKKEL. The disordered stretch occupies residues 189–210; it reads KQKEPATSGENSARPMAIKKEL.

Belongs to the WRB/GET1 family. Interacts with GET3.

The protein resides in the endoplasmic reticulum membrane. Required for the post-translational delivery of tail-anchored (TA) proteins to the endoplasmic reticulum. Acts as a membrane receptor for soluble GET3, which recognizes and selectively binds the transmembrane domain of TA proteins in the cytosol. The sequence is that of Protein GET1 from Coccidioides posadasii (strain C735) (Valley fever fungus).